Here is a 395-residue protein sequence, read N- to C-terminus: Ankyrin repeat domain-containing protein 65 (395 aa).

10 ANK repeats span residues 52-81 (QAWG…SVEE), 85-114 (AGRT…QVGA), 118-147 (AGRT…PANA), 151-180 (AGLT…PGPT), 185-212 (RGWT…GGAR), 213-241 (LDSV…PVDA), 245-274 (VGAT…DPSL), 278-307 (HGRS…EVDS), 311-340 (LGLT…EINA), and 344-373 (LHKT…SPTL).

The sequence is that of Ankyrin repeat domain-containing protein 65 (ANKRD65) from Bos taurus (Bovine).